Consider the following 269-residue polypeptide: Protein OPG079 (269 aa).

The protein belongs to the orthopoxvirus OPG079 family. As to quaternary structure, homoomultimer (Potential). Interacts with the small subunit of ribonucleotide reductase. Interacts with host FAM111A; this interaction protomtes OPG079 degradation through autophagy.

Its subcellular location is the host cytoplasm. Its function is as follows. Plays an essential role in viral DNA replication. Binds to ssDNA with high affinity and localizes to cytoplasmic factories where nascent viral genomes accumulate. May disrupt loops, hairpins and other secondary structures present on ssDNA to reduce and eliminate pausing of viral DNA polymerase at specific sites during elongation. The protein is Protein OPG079 (OPG079) of Vaccinia virus (strain Copenhagen) (VACV).